We begin with the raw amino-acid sequence, 756 residues long: Phosphoinositide 3-kinase regulatory subunit 6 (756 aa).

2 disordered regions span residues 570-589 (SKSPKEGSSPRRRGAAEGTG) and 716-738 (CSRTQKSKTSALNSHGQETEKNM). The segment covering 717–731 (SRTQKSKTSALNSHG) has biased composition (polar residues).

As to quaternary structure, heterodimer of a catalytic subunit (PIK3CG) and a regulatory (PIK3R6) subunit. The binding of PIK3R6 to PIK3CG may exclude the binding of PIK3R5 to PIK3CG. Interacts with beta-gamma G protein dimers. Interacts with PDE3B and RAPGEF3; form a signaling complex that regulates phosphatidylinositol 3-kinase gamma in angiogenesis. Highly expressed in heart. In a lower extent, also expressed in brain, spleen, lung, liver, kidney, prostate, thyroid, salivary gland, dendritic cells, macrophages and neutrophils.

It localises to the cytoplasm. The protein resides in the cell membrane. In terms of biological role, regulatory subunit of the PI3K gamma complex. Acts as an adapter to drive activation of PIK3CG by beta-gamma G protein dimers. The PIK3CG:PIK3R6 heterodimer is much less sensitive to beta-gamma G proteins than PIK3CG:PIK3R5 and its membrane recruitment and beta-gamma G protein dimer-dependent activation requires HRAS bound to PIK3CG. Recruits of the PI3K gamma complex to a PDE3B:RAPGEF3 signaling complex involved in angiogenesis; signaling seems to involve RRAS. This chain is Phosphoinositide 3-kinase regulatory subunit 6 (Pik3r6), found in Mus musculus (Mouse).